Reading from the N-terminus, the 157-residue chain is Baculoviral IAP repeat-containing protein 5.2-B (157 aa).

Residues 31–101 (RLRTFSNWPF…KHSPSCLFIA (71 aa)) form a BIR repeat. Residue T47 is modified to Phosphothreonine; by CDK1. Zn(2+) is bound by residues C70, C73, H90, and C97.

It belongs to the IAP family. Component of the CPC at least composed of survivin/birc5, incenp, cdca8/borealin and/or cdca9/dasra-A, and aurkb/aurora-B. Interacts directly with incenp (via N-terminus). Interacts with rxra; the interaction is stronger in the absence of 9-cis retinoic acids. Ubiquitination is required for centrosome-targeting. Exhibits strong and homogeneous expression in developing oocytes. In embryos, expressed in the animal hemisphere from one-cell to yolk plug stages, and highly expressed in the future brain and dorsal region of the neural tube at the neurula stage and early tail-bud stage. At tadpole stages, expression is restricted at a low level to the head region.

It localises to the cytoplasm. It is found in the nucleus. The protein resides in the chromosome. Its subcellular location is the centromere. The protein localises to the cytoskeleton. It localises to the spindle. In terms of biological role, does not appear to exhibit anti-apoptotic activity. Plays a role in increasing blood vessel size during development. Component of the chromosomal passenger complex (CPC), a complex that acts as a key regulator of mitosis. The CPC complex has essential functions at the centromere in ensuring correct chromosome alignment and segregation and is required for chromatin-induced microtubule stabilization and spindle assembly. This is Baculoviral IAP repeat-containing protein 5.2-B (birc5.2-b) from Xenopus laevis (African clawed frog).